The following is a 413-amino-acid chain: Divalent metal cation transporter MntH (413 aa).

Topologically, residues 1–19 are cytoplasmic; it reads MTDNRVENSSGRAARKLRL. A helical transmembrane segment spans residues 20–39; the sequence is ALMGPAFIAAIGYIDPGNFA. At 40-51 the chain is on the periplasmic side; that stretch reads TNIQAGASFGYQ. The chain crosses the membrane as a helical span at residues 52-71; it reads LLWVVVWANLMAMLIQILSA. The Cytoplasmic portion of the chain corresponds to 72–95; it reads KLGIATGKNLAEQIRDHYPRPVVW. A helical transmembrane segment spans residues 96-118; the sequence is FYWVQAEIIAMATDLAEFIGAAI. The Periplasmic segment spans residues 119 to 125; it reads GFKLILG. The chain crosses the membrane as a helical span at residues 126–145; that stretch reads VSLLQGAVLTGIATFLILML. At 146–155 the chain is on the cytoplasmic side; the sequence is QRRGQKPLEK. A helical membrane pass occupies residues 156 to 175; that stretch reads VIGGLLLFVAAAYIVELFFS. At 176 to 196 the chain is on the periplasmic side; sequence QPDMAQLGKGMVIPALPNPEA. The helical transmembrane segment at 197 to 220 threads the bilayer; it reads VFLAAGVLGATIMPHVIYLHSSLT. Residues 221–238 lie on the Cytoplasmic side of the membrane; that stretch reads QHLHGGTRQQRYSATKWD. A helical membrane pass occupies residues 239–258; the sequence is VAIAMTIAGFVNLAMMATAA. The Periplasmic portion of the chain corresponds to 259-276; that stretch reads AAFHFSGHTGIADLDQAY. The helical transmembrane segment at 277-297 threads the bilayer; it reads LTLEPLLSHAAATVFGLSLVA. Residues 298–327 lie on the Cytoplasmic side of the membrane; sequence AGLSSTVVGTLAGQVVMQGFVRFHIPLWVR. Residues 328–344 traverse the membrane as a helical segment; that stretch reads RSITMLPSFIVILMGLD. Over 345-350 the chain is Periplasmic; it reads PTRILV. The helical transmembrane segment at 351–370 threads the bilayer; the sequence is MSQVLLSFGIALALVPLLIF. The Cytoplasmic segment spans residues 371 to 387; sequence TSNATLMGELVNTRRVK. A helical membrane pass occupies residues 388-406; that stretch reads QIGWIIVVLVVALNIWLLV. Residues 407–413 are Periplasmic-facing; sequence GTVMGLS.

The protein belongs to the NRAMP family.

The protein resides in the cell inner membrane. Functionally, h(+)-stimulated, divalent metal cation uptake system. The sequence is that of Divalent metal cation transporter MntH from Salmonella gallinarum (strain 287/91 / NCTC 13346).